The primary structure comprises 210 residues: Frataxin, mitochondrial (210 aa).

The N-terminal 41 residues, 1 to 41, are a transit peptide targeting the mitochondrion; it reads MWTLGRRAVAGLLASPSPAQAQTLTRVPRPAELAPLCGRRG.

Belongs to the frataxin family. Component of the mitochondrial core iron-sulfur cluster (ISC) complex composed of NFS1, LYRM4, NDUFAB1, ISCU, FXN, and FDX2; this complex is a heterohexamer containing two copies of each monomer. Homodimer. Monomer (probable predominant form). Oligomer. Monomers and polymeric aggregates of &gt;1 MDa have been isolated from mitochondria. A small fraction of heterologous overexpressed recombinant frataxin forms high-molecular weight aggregates that incorporate iron. Interacts with LYRM4. Interacts (via ferrous form) with ISCU; the interaction is possible when both are bound to the dimeric form of the cysteine desulfurase complex (NFS1:LYRM4) and the interaction enhances FXN interaction to the dimeric form of the cysteine desulfurase complex (NFS1:LYRM4). Interacts with FECH; one iron-bound FXN monomer seems to interact with a FECH homodimer. Interacts with SDHA and SDHB. Interacts with ACO2; the interaction is dependent on citrate. Interacts with HSPA9. As to quaternary structure, interacts with ACO1. Interacts with ISCU (cytoplasmic form). Processed in two steps by mitochondrial processing peptidase (MPP). MPP first cleaves the precursor to intermediate form and subsequently converts the intermediate to yield frataxin mature form (frataxin(81-210)) which is the predominant form. The additional forms, frataxin(56-210) and frataxin(78-210), seem to be produced when the normal maturation process is impaired; their physiological relevance is unsure. In terms of tissue distribution, expressed in the heart, peripheral blood lymphocytes and dermal fibroblasts.

It is found in the mitochondrion. The protein resides in the cytoplasm. The protein localises to the cytosol. It carries out the reaction 4 Fe(2+) + O2 + 4 H(+) = 4 Fe(3+) + 2 H2O. In terms of biological role, functions as an activator of persulfide transfer to the scaffoding protein ISCU as component of the core iron-sulfur cluster (ISC) assembly complex and participates to the [2Fe-2S] cluster assembly. Accelerates sulfur transfer from NFS1 persulfide intermediate to ISCU and to small thiols such as L-cysteine and glutathione leading to persulfuration of these thiols and ultimately sulfide release. Binds ferrous ion and is released from FXN upon the addition of both L-cysteine and reduced FDX2 during [2Fe-2S] cluster assembly. The core iron-sulfur cluster (ISC) assembly complex is involved in the de novo synthesis of a [2Fe-2S] cluster, the first step of the mitochondrial iron-sulfur protein biogenesis. This process is initiated by the cysteine desulfurase complex (NFS1:LYRM4:NDUFAB1) that produces persulfide which is delivered on the scaffold protein ISCU in a FXN-dependent manner. Then this complex is stabilized by FDX2 which provides reducing equivalents to accomplish the [2Fe-2S] cluster assembly. Finally, the [2Fe-2S] cluster is transferred from ISCU to chaperone proteins, including HSCB, HSPA9 and GLRX5. May play a role in the protection against iron-catalyzed oxidative stress through its ability to catalyze the oxidation of Fe(2+) to Fe(3+); the oligomeric form but not the monomeric form has in vitro ferroxidase activity. May be able to store large amounts of iron in the form of a ferrihydrite mineral by oligomerization; however, the physiological relevance is unsure as reports are conflicting and the function has only been shown using heterologous overexpression systems. May function as an iron chaperone protein that protects the aconitase [4Fe-4S]2+ cluster from disassembly and promotes enzyme reactivation. May play a role as a high affinity iron binding partner for FECH that is capable of both delivering iron to ferrochelatase and mediating the terminal step in mitochondrial heme biosynthesis. Modulates the RNA-binding activity of ACO1. May be involved in the cytoplasmic iron-sulfur protein biogenesis. May contribute to oxidative stress resistance and overall cell survival. This Homo sapiens (Human) protein is Frataxin, mitochondrial.